The sequence spans 859 residues: Leucine--tRNA ligase (859 aa).

Positions 42–52 match the 'HIGH' region motif; that stretch reads PYPSGRLHMGH. A 'KMSKS' region motif is present at residues 618–622; the sequence is KMSKS. Lysine 621 serves as a coordination point for ATP.

The protein belongs to the class-I aminoacyl-tRNA synthetase family.

It localises to the cytoplasm. The catalysed reaction is tRNA(Leu) + L-leucine + ATP = L-leucyl-tRNA(Leu) + AMP + diphosphate. The protein is Leucine--tRNA ligase of Shewanella amazonensis (strain ATCC BAA-1098 / SB2B).